Consider the following 251-residue polypeptide: Protection of telomeres homolog 2 (251 aa).

A disordered region spans residues 221 to 251 (ELDNWPEGPPKTFAEAIARANNSRRPRDPPQ).

The protein belongs to the telombin family.

The protein localises to the nucleus. It is found in the chromosome. Its subcellular location is the telomere. Functionally, telomeric DNA-binding protein, which binds to two or more single-stranded G-rich repeat sequences (G-strand), with high specificity to the 5'-TTAGGC-3' sequence. In addition, repeat sequence binding requires a 3' single-stranded telomeric overhang. Acts redundantly with pot-1 to negatively regulate telomerase-mediated telomere extension. Also regulates telomere length by the telomerase-independent telomere maintenance pathway called ALT (alternative lengthening of telomeres). Does not appear to have a role in anchoring telomeres to the nuclear envelope. This is Protection of telomeres homolog 2 from Caenorhabditis elegans.